The chain runs to 603 residues: MSRGSRLHRWPLLLLLLLLLPPPPVLPAEARTPAPVNPCCYYPCQHQGICVRFGLDRYQCDCTRTGYSGPNCTIPELWTWLRNSLRPSPSFLHFLLTHGRWFWEFINATFIRDMLMRLVLTARSNLIPSPPTYNIAHDYISWESFSNVSYYTRVLPSVPQDCPTPMGTKGKKQLPDAQLLGRRFLLRRKFIPDPQGTNLMFAFFAQHFTHQFFKTSGKMGPGFTKALGHGVDLGHIYGDNLDRQYQLRLFKDGKLKYQVLDGEMYPPSVEEAPVLMHYPRGILPQSQMAVGQEVFGLLPGLMLYATLWLREHNRVCDLLKAEHPTWGDEQLFQTARLILIGETIKIVIEEYVQQLSGYFLQLKFDPELLFSAQFQYRNRIAMEFNQLYHWHPLMPDSFWVGSQEYSYEQFLFNTSMLTHYGIEALVDAFSRQSAGRIGGGRNIDHHVLHVAVETIKESRELRLQPFNEYRKRFGMRPYMSFQELTGEKEMAAELEELYGDIDALEFYPGLLLEKCHPNSIFGESMIEIGAPFSLKGLLGNPICSPEYWKPSTFGGEMGFNMVKTATLKKLVCLNTKTCPYVSFRVPDPHQDGGPGVERPSTEL.

An N-terminal signal peptide occupies residues 1 to 27 (MSRGSRLHRWPLLLLLLLLLPPPPVLP). Residues 35 to 73 (PVNPCCYYPCQHQGICVRFGLDRYQCDCTRTGYSGPNCT) enclose the EGF-like domain. Disulfide bonds link Cys-39–Cys-50, Cys-40–Cys-162, Cys-44–Cys-60, and Cys-62–Cys-72. Asn-71, Asn-107, and Asn-147 each carry an N-linked (GlcNAc...) asparagine glycan. The Proton acceptor role is filled by His-210. Tyr-388 acts as the For cyclooxygenase activity in catalysis. A heme b-binding site is contributed by His-391. Cys-572 and Cys-578 form a disulfide bridge.

Belongs to the prostaglandin G/H synthase family. In terms of assembly, homodimer. Heme b is required as a cofactor. In terms of processing, N-glycosylated. N-linked glycosylation is necessary for enzymatic activity. Brain cortex. Isoform 2 is expressed in the cerebral cortex and heart.

Its subcellular location is the microsome membrane. It localises to the endoplasmic reticulum membrane. It carries out the reaction (5Z,8Z,11Z,14Z)-eicosatetraenoate + AH2 + 2 O2 = prostaglandin H2 + A + H2O. The catalysed reaction is (5Z,8Z,11Z,14Z)-eicosatetraenoate + 2 O2 = prostaglandin G2. It catalyses the reaction prostaglandin G2 + AH2 = prostaglandin H2 + A + H2O. The enzyme catalyses (9Z,12Z)-octadecadienoate + AH2 + O2 = (9R)-hydroxy-(10E,12Z)-octadecadienoate + A + H2O. It carries out the reaction (9Z,12Z)-octadecadienoate + AH2 + O2 = (9S)-hydroxy-(10E,12Z)-octadecadienoate + A + H2O. The catalysed reaction is (9Z,12Z)-octadecadienoate + AH2 + O2 = (13S)-hydroxy-(9Z,11E)-octadecadienoate + A + H2O. It catalyses the reaction (9Z,12Z)-octadecadienoate + AH2 + O2 = (13R)-hydroxy-(9Z,11E)-octadecadienoate + A + H2O. It participates in lipid metabolism; prostaglandin biosynthesis. With respect to regulation, the cyclooxygenase activity is inhibited by nonsteroidal anti-inflammatory drugs (NSAIDs) including ibuprofen, flurbiprofen, ketoprofen, naproxen, flurbiprofen, anirolac, fenclofenac and diclofenac. In terms of biological role, dual cyclooxygenase and peroxidase that plays an important role in the biosynthesis pathway of prostanoids, a class of C20 oxylipins mainly derived from arachidonate ((5Z,8Z,11Z,14Z)-eicosatetraenoate, AA, C20:4(n-6)), with a particular role in the inflammatory response. The cyclooxygenase activity oxygenates AA to the hydroperoxy endoperoxide prostaglandin G2 (PGG2), and the peroxidase activity reduces PGG2 to the hydroxy endoperoxide prostaglandin H2 (PGH2), the precursor of all 2-series prostaglandins and thromboxanes. This complex transformation is initiated by abstraction of hydrogen at carbon 13 (with S-stereochemistry), followed by insertion of molecular O2 to form the endoperoxide bridge between carbon 9 and 11 that defines prostaglandins. The insertion of a second molecule of O2 (bis-oxygenase activity) yields a hydroperoxy group in PGG2 that is then reduced to PGH2 by two electrons. Involved in the constitutive production of prostanoids in particular in the stomach and platelets. In gastric epithelial cells, it is a key step in the generation of prostaglandins, such as prostaglandin E2 (PGE2), which plays an important role in cytoprotection. In platelets, it is involved in the generation of thromboxane A2 (TXA2), which promotes platelet activation and aggregation, vasoconstriction and proliferation of vascular smooth muscle cells. Can also use linoleate (LA, (9Z,12Z)-octadecadienoate, C18:2(n-6)) as substrate and produce hydroxyoctadecadienoates (HODEs) in a regio- and stereospecific manner, being (9R)-HODE ((9R)-hydroxy-(10E,12Z)-octadecadienoate) and (13S)-HODE ((13S)-hydroxy-(9Z,11E)-octadecadienoate) its major products. The polypeptide is Prostaglandin G/H synthase 1 (PTGS1) (Canis lupus familiaris (Dog)).